Reading from the N-terminus, the 341-residue chain is S-adenosylmethionine:tRNA ribosyltransferase-isomerase (341 aa).

Belongs to the QueA family. In terms of assembly, monomer.

The protein localises to the cytoplasm. It carries out the reaction 7-aminomethyl-7-carbaguanosine(34) in tRNA + S-adenosyl-L-methionine = epoxyqueuosine(34) in tRNA + adenine + L-methionine + 2 H(+). It participates in tRNA modification; tRNA-queuosine biosynthesis. Its function is as follows. Transfers and isomerizes the ribose moiety from AdoMet to the 7-aminomethyl group of 7-deazaguanine (preQ1-tRNA) to give epoxyqueuosine (oQ-tRNA). In Clostridium botulinum (strain Kyoto / Type A2), this protein is S-adenosylmethionine:tRNA ribosyltransferase-isomerase.